The following is a 430-amino-acid chain: Transcription factor E2F1 (430 aa).

Residues Ala62–Phe103 form a cyclin A:CDK2 binding region. Residues Lys84–Leu186 are interaction with BIRC2/c-IAP1. The tract at residues Tyr95 to Tyr123 is disordered. A DNA-binding region spans residues Gly105–His189. N6-acetyllysine occurs at positions 112, 115, and 120. The leucine-zipper stretch occupies residues Leu148–Leu169. Positions Glu153–His189 match the DEF box motif. An N6-methyllysine; by SETD7 modification is found at Lys180. Positions Gly187 to Ser375 are required for interaction with TRIM28. A dimerization region spans residues Thr190–Ile279. A disordered region spans residues Pro294–Ser340. The span at Ala324–Thr333 shows a compositional bias: pro residues. Residues Pro361–Phe430 are transactivation. A phosphoserine mark is found at Ser368 and Ser396. The segment at Leu402 to Asp419 is RB1 binding. Position 426 is a phosphothreonine (Thr426).

Belongs to the E2F/DP family. As to quaternary structure, component of the DRTF1/E2F transcription factor complex. Forms heterodimers with DP family members. The E2F1 complex binds specifically hypophosphorylated RB1, the interaction represses E2F1-driven transcription. During the cell cycle, RB1 becomes phosphorylated in mid-to-late G1 phase, detaches from the DRTF1/E2F complex, rendering E2F transcriptionally active. Interacts with TRRAP, which probably mediates its interaction with histone acetyltransferase complexes, leading to transcription activation. Binds TOPBP1 and EAPP. Interacts with ARID3A. Interacts with TRIM28; the interaction inhibits E2F1 acetylation through recruiting HDAC1 and represses its transcriptional activity. Interaction with KAT2B; the interaction acetylates E2F1 enhancing its DNA-binding and transcriptional activity. Interacts with BIRC2/c-IAP1 (via BIR domains). The complex TFDP1:E2F1 interacts with CEBPA; the interaction prevents CEBPA binding to target genes promoters and represses its transcriptional activity. Interacts with RRP1B. Interacts with HCFC1. Interacts with KMT2E; the interaction is probably indirect and is mediated via HCFC1. Interacts with DCAF5 and L3MBTL3; the interaction requires methylation at Lys-180 and is necessary to target E2F1 for ubiquitination by the CRL4-DCAF5 E3 ubiquitin ligase complex. In terms of processing, phosphorylated by CDK2 and cyclin A-CDK2 in the S-phase. Phosphorylation by CHEK2 stabilizes E2F1 upon DNA damage and regulates its effect on transcription and apoptosis. Phosphorylation at Ser-396 by GSK3B promotes interaction with USP11, leading to its deubiquitination and stabilization. Ubiquitinated via 'Lys-63'-linked ubiquitin, leading to its degradation. Deubiquitinated by USP11 following phosphorylation by GSK3B, promoting its stability. Post-translationally, acetylation stimulates DNA-binding. Enhanced under stress conditions such as DNA damage and inhibited by retinoblastoma protein RB1. Regulated by KAP1/TRIM28 which recruits HDAC1 to E2F1 resulting in deacetylation. Acetylated by P/CAF/KAT2B. In terms of processing, methylation at Lys-180 by SETD7 promotes E2F1 ubiquitin-dependent proteasomal degradation.

The protein resides in the nucleus. Its activity is regulated as follows. BIRC2/c-IAP1 stimulates its transcriptional activity. In terms of biological role, transcription activator that binds DNA cooperatively with DP proteins through the E2 recognition site, 5'-TTTC[CG]CGC-3' found in the promoter region of a number of genes whose products are involved in cell cycle regulation or in DNA replication. The DRTF1/E2F complex functions in the control of cell-cycle progression from G1 to S phase. E2F1 binds preferentially RB1 in a cell-cycle dependent manner. It can mediate both cell proliferation and TP53/p53-dependent apoptosis. Blocks adipocyte differentiation by binding to specific promoters repressing CEBPA binding to its target gene promoters. Directly activates transcription of PEG10. Positively regulates transcription of RRP1B. This is Transcription factor E2F1 from Mus musculus (Mouse).